The primary structure comprises 805 residues: Kinesin-like protein Klp10A (805 aa).

Residues 1–274 (MDMITVGQSV…FVPLLDGQAV (274 aa)) form a globular region. 2 disordered regions span residues 68-94 (QHAA…SAIG) and 117-211 (IPNP…RRSH). Residues 80–94 (APMNLSRNPTQSAIG) are compositionally biased toward polar residues. Residues 123-136 (SSNSVNTNSNSNTT) are compositionally biased toward low complexity. S157 is subject to Phosphoserine. Residues 158-179 (QAATGQQQTRIASAVPNNTLPN) show a composition bias toward polar residues. Positions 180–200 (PSAAASAGPAAQGVATAATTQ) are enriched in low complexity. A coiled-coil region spans residues 205–244 (ASTRRSHALKEVERLKENREKRRARQAEMKEEKVALMNQD). Residues 278–610 (QITVCVRKRP…LRYADRVKEL (333 aa)) form the Kinesin motor domain. ATP is bound at residue 368 to 375 (GQTGSGKT). A Phosphothreonine modification is found at T630. The segment at 633 to 688 (EEEEELNMVHPHSHQLHPNSHAPASQSNNQRAPASHHSGAVIHNNNNNNNKNGNAG) is disordered. A compositionally biased stretch (polar residues) spans 648–664 (LHPNSHAPASQSNNQRA). Over residues 676–688 (NNNNNNNKNGNAG) the composition is skewed to low complexity. Phosphoserine occurs at positions 795, 797, and 800.

This sequence belongs to the TRAFAC class myosin-kinesin ATPase superfamily. Kinesin family. MCAK/KIF2 subfamily. Interacts with Alms1a (via C-terminus). As to expression, expressed in male germline stem cells and spermatogonia (at protein level).

Its subcellular location is the cytoplasm. It localises to the cytoskeleton. The protein localises to the microtubule organizing center. It is found in the centrosome. The protein resides in the spindle pole. Its subcellular location is the chromosome. It localises to the centromere. Its function is as follows. Required during anaphase to drive sister chromatid separation to promote flux by actively depolymerizing kinetochore microtubules at their pole-associated minus ends, thereby moving chromatids through a 'poleward flux'. Involved in asymmetric cell division of sensory organ precursor (SOP) cells by playing a role in the asymmetric localization of Sara-expressing endosomes to the pIIa daughter cell but not to the pIIb cell. Klp98A targets Sara-expressing endosomes to the central spindle which is symmetrically arranged in early cell division. During late cytokinesis, central spindle asymmetry is generated by enrichment of Patronin on the pIIb side which protects microtubules from depolymerization by Klp10A while unprotected microtubules on the pIIa side are disassembled by Klp10A, leading to the asymmetric delivery of Sara-expressing endosomes to the pIIa daughter cell. In Drosophila melanogaster (Fruit fly), this protein is Kinesin-like protein Klp10A.